Consider the following 699-residue polypeptide: Elongation factor G (699 aa).

Positions 10–292 (DRTRNIGIMA…AVIDYLPSPT (283 aa)) constitute a tr-type G domain. Residues 19 to 26 (AHIDAGKT), 90 to 94 (DTPGH), and 144 to 147 (NKMD) each bind GTP.

Belongs to the TRAFAC class translation factor GTPase superfamily. Classic translation factor GTPase family. EF-G/EF-2 subfamily.

The protein resides in the cytoplasm. Functionally, catalyzes the GTP-dependent ribosomal translocation step during translation elongation. During this step, the ribosome changes from the pre-translocational (PRE) to the post-translocational (POST) state as the newly formed A-site-bound peptidyl-tRNA and P-site-bound deacylated tRNA move to the P and E sites, respectively. Catalyzes the coordinated movement of the two tRNA molecules, the mRNA and conformational changes in the ribosome. The polypeptide is Elongation factor G (Coxiella burnetii (strain Dugway 5J108-111)).